A 761-amino-acid chain; its full sequence is Phosphoribosylformylglycinamidine synthase subunit PurL (761 aa).

The active site involves histidine 48. Tyrosine 51 and lysine 90 together coordinate ATP. Glutamate 92 contributes to the Mg(2+) binding site. Substrate-binding positions include 93–96 (SHNH) and arginine 115. The active-site Proton acceptor is histidine 94. Aspartate 116 lines the Mg(2+) pocket. Glutamine 239 is a substrate binding site. Aspartate 267 lines the Mg(2+) pocket. 311 to 313 (ESQ) contacts substrate. The ATP site is built by aspartate 499 and glycine 536. Position 537 (asparagine 537) interacts with Mg(2+). Position 539 (serine 539) interacts with substrate.

It belongs to the FGAMS family. Monomer. Part of the FGAM synthase complex composed of 1 PurL, 1 PurQ and 2 PurS subunits.

Its subcellular location is the cytoplasm. The enzyme catalyses N(2)-formyl-N(1)-(5-phospho-beta-D-ribosyl)glycinamide + L-glutamine + ATP + H2O = 2-formamido-N(1)-(5-O-phospho-beta-D-ribosyl)acetamidine + L-glutamate + ADP + phosphate + H(+). It functions in the pathway purine metabolism; IMP biosynthesis via de novo pathway; 5-amino-1-(5-phospho-D-ribosyl)imidazole from N(2)-formyl-N(1)-(5-phospho-D-ribosyl)glycinamide: step 1/2. In terms of biological role, part of the phosphoribosylformylglycinamidine synthase complex involved in the purines biosynthetic pathway. Catalyzes the ATP-dependent conversion of formylglycinamide ribonucleotide (FGAR) and glutamine to yield formylglycinamidine ribonucleotide (FGAM) and glutamate. The FGAM synthase complex is composed of three subunits. PurQ produces an ammonia molecule by converting glutamine to glutamate. PurL transfers the ammonia molecule to FGAR to form FGAM in an ATP-dependent manner. PurS interacts with PurQ and PurL and is thought to assist in the transfer of the ammonia molecule from PurQ to PurL. The protein is Phosphoribosylformylglycinamidine synthase subunit PurL of Thermosynechococcus vestitus (strain NIES-2133 / IAM M-273 / BP-1).